The chain runs to 289 residues: Bifunctional protein FolD (289 aa).

NADP(+) is bound by residues Gly166–Ser168, Ser191, and Ile232.

It belongs to the tetrahydrofolate dehydrogenase/cyclohydrolase family. Homodimer.

The catalysed reaction is (6R)-5,10-methylene-5,6,7,8-tetrahydrofolate + NADP(+) = (6R)-5,10-methenyltetrahydrofolate + NADPH. It catalyses the reaction (6R)-5,10-methenyltetrahydrofolate + H2O = (6R)-10-formyltetrahydrofolate + H(+). Its pathway is one-carbon metabolism; tetrahydrofolate interconversion. Catalyzes the oxidation of 5,10-methylenetetrahydrofolate to 5,10-methenyltetrahydrofolate and then the hydrolysis of 5,10-methenyltetrahydrofolate to 10-formyltetrahydrofolate. The chain is Bifunctional protein FolD from Synechococcus elongatus (strain ATCC 33912 / PCC 7942 / FACHB-805) (Anacystis nidulans R2).